We begin with the raw amino-acid sequence, 199 residues long: Chaperone protein TorD (199 aa).

The protein belongs to the TorD/DmsD family. TorD subfamily.

It is found in the cytoplasm. Functionally, involved in the biogenesis of TorA. Acts on TorA before the insertion of the molybdenum cofactor and, as a result, probably favors a conformation of the apoenzyme that is competent for acquiring the cofactor. The sequence is that of Chaperone protein TorD from Escherichia coli O139:H28 (strain E24377A / ETEC).